The sequence spans 193 residues: Ion-translocating oxidoreductase complex subunit A (193 aa).

Helical transmembrane passes span 5–25, 47–67, 72–92, 102–122, 134–154, and 171–191; these read LLLF…FLGL, FVMT…LIPL, LRTL…EMVV, LLGI…VALL, ALYG…FAAI, and AIAL…SGLV.

It belongs to the NqrDE/RnfAE family. The complex is composed of six subunits: RsxA, RsxB, RsxC, RsxD, RsxE and RsxG.

The protein localises to the cell inner membrane. In terms of biological role, part of a membrane-bound complex that couples electron transfer with translocation of ions across the membrane. Required to maintain the reduced state of SoxR. This Salmonella arizonae (strain ATCC BAA-731 / CDC346-86 / RSK2980) protein is Ion-translocating oxidoreductase complex subunit A.